The chain runs to 910 residues: DNA mismatch repair protein MutS (910 aa).

The span at 1-11 (MEAKVEEKEPE) shows a compositional bias: basic and acidic residues. The disordered stretch occupies residues 1 to 21 (MEAKVEEKEPEPVENAGPDAP). 658–665 (GPNMGGKS) contributes to the ATP binding site.

The protein belongs to the DNA mismatch repair MutS family.

This protein is involved in the repair of mismatches in DNA. It is possible that it carries out the mismatch recognition step. This protein has a weak ATPase activity. The chain is DNA mismatch repair protein MutS from Brucella suis (strain ATCC 23445 / NCTC 10510).